The following is a 387-amino-acid chain: 3-ketoacyl-CoA thiolase (387 aa).

C91 functions as the Acyl-thioester intermediate in the catalytic mechanism. Active-site proton acceptor residues include H343 and C373.

It belongs to the thiolase-like superfamily. Thiolase family. Heterotetramer of two alpha chains (FadB) and two beta chains (FadA).

It is found in the cytoplasm. The enzyme catalyses an acyl-CoA + acetyl-CoA = a 3-oxoacyl-CoA + CoA. It participates in lipid metabolism; fatty acid beta-oxidation. In terms of biological role, catalyzes the final step of fatty acid oxidation in which acetyl-CoA is released and the CoA ester of a fatty acid two carbons shorter is formed. The sequence is that of 3-ketoacyl-CoA thiolase from Aliivibrio salmonicida (strain LFI1238) (Vibrio salmonicida (strain LFI1238)).